The sequence spans 61 residues: Small ribosomal subunit protein uS14 (61 aa).

Zn(2+)-binding residues include C24, C27, C40, and C43.

Belongs to the universal ribosomal protein uS14 family. Zinc-binding uS14 subfamily. As to quaternary structure, part of the 30S ribosomal subunit. Contacts proteins S3 and S10. Zn(2+) serves as cofactor.

Functionally, binds 16S rRNA, required for the assembly of 30S particles and may also be responsible for determining the conformation of the 16S rRNA at the A site. This is Small ribosomal subunit protein uS14 from Alkaliphilus oremlandii (strain OhILAs) (Clostridium oremlandii (strain OhILAs)).